We begin with the raw amino-acid sequence, 136 residues long: Protein NrdI (136 aa).

This sequence belongs to the NrdI family.

In terms of biological role, probably involved in ribonucleotide reductase function. The protein is Protein NrdI of Salmonella paratyphi B (strain ATCC BAA-1250 / SPB7).